The chain runs to 149 residues: Urease accessory protein UreE (149 aa).

Belongs to the UreE family.

It localises to the cytoplasm. Functionally, involved in urease metallocenter assembly. Binds nickel. Probably functions as a nickel donor during metallocenter assembly. The polypeptide is Urease accessory protein UreE (Synechococcus sp. (strain JA-3-3Ab) (Cyanobacteria bacterium Yellowstone A-Prime)).